The primary structure comprises 312 residues: Secreted RxLR effector protein 14 (312 aa).

A signal peptide spans 1-20 (MHSFKLLLALIVAICTSCDA). The short motif at 46 to 61 (RLLRAKDGKVRADEER) is the RxLR-dEER element.

The protein belongs to the RxLR effector family.

The protein resides in the secreted. The protein localises to the host nucleus. Functionally, secreted effector that completely suppresses the host cell death induced by cell death-inducing proteins. This is Secreted RxLR effector protein 14 from Plasmopara viticola (Downy mildew of grapevine).